Consider the following 281-residue polypeptide: Nuclear receptor-interacting protein 2 (281 aa).

Residues 18–85 form a disordered region; that stretch reads ESCSTGQRQA…RAHLSQQRRL (68 aa). A compositionally biased stretch (pro residues) spans 36-47; that stretch reads TPPPSSPWPTPP. Positions 55 to 78 are enriched in basic and acidic residues; that stretch reads QEARRDEGEARTRGQEAQLRDRAH. Positions 244 to 248 match the LXXLL motif motif; it reads LQTLL.

In terms of assembly, interacts with NR1F2, RARA and THRB in a ligand-dependent manner.

The protein localises to the nucleus. Its function is as follows. Down-regulates transcriptional activation by nuclear receptors such as NR1F2. The sequence is that of Nuclear receptor-interacting protein 2 (NRIP2) from Homo sapiens (Human).